The primary structure comprises 278 residues: Elongation factor Ts (278 aa).

An involved in Mg(2+) ion dislocation from EF-Tu region spans residues 79 to 82; it reads TDFV.

The protein belongs to the EF-Ts family.

It is found in the cytoplasm. In terms of biological role, associates with the EF-Tu.GDP complex and induces the exchange of GDP to GTP. It remains bound to the aminoacyl-tRNA.EF-Tu.GTP complex up to the GTP hydrolysis stage on the ribosome. This chain is Elongation factor Ts, found in Borrelia recurrentis (strain A1).